The chain runs to 101 residues: Chaperone modulatory protein CbpM (101 aa).

The protein belongs to the CbpM family.

Functionally, interacts with CbpA and inhibits both the DnaJ-like co-chaperone activity and the DNA binding activity of CbpA. Together with CbpA, modulates the activity of the DnaK chaperone system. Does not inhibit the co-chaperone activity of DnaJ. This is Chaperone modulatory protein CbpM from Salmonella agona (strain SL483).